The chain runs to 351 residues: Protein RecA (351 aa).

ATP is bound at residue 73–80 (GPESSGKT).

This sequence belongs to the RecA family.

Its subcellular location is the cytoplasm. In terms of biological role, can catalyze the hydrolysis of ATP in the presence of single-stranded DNA, the ATP-dependent uptake of single-stranded DNA by duplex DNA, and the ATP-dependent hybridization of homologous single-stranded DNAs. It interacts with LexA causing its activation and leading to its autocatalytic cleavage. The protein is Protein RecA of Herbaspirillum seropedicae.